Here is a 255-residue protein sequence, read N- to C-terminus: Small ribosomal subunit protein uS2 (255 aa).

This sequence belongs to the universal ribosomal protein uS2 family.

The protein is Small ribosomal subunit protein uS2 of Streptococcus pyogenes serotype M49 (strain NZ131).